The sequence spans 356 residues: Dynein axonemal heavy chain 12 (356 aa).

6 ANK repeats span residues 17-46 (DSSSILLEAASGGNPDSVTLLLEYGADANV), 50-81 (SGHLPIHVAADRGHLLALKTLVPVTDFAAIKR), 82-111 (SGISPIHCAAAGAHPKCLELLIQAGFDVNF), 124-153 (HRKSALYFAVSNGDLSSVKLLLSAGAMPNQ), 154-183 (DPVNCLQIALRMGNYELVSLLLRHGANVNY), and 185-218 (CRVNPLHFPSALQYTLKDEVMLRMLLNYGYDTEL). Positions 290 to 345 (WSEIHFILTNPRSLKHLCRLKIRKCMGRLRLRCPVFMSFLPLPSRLKAYVLYKEYD) constitute an SOCS box domain.

Belongs to the dynein heavy chain family. Consists of at least two heavy chains and a number of intermediate and light chains.

The protein localises to the cytoplasm. It is found in the cytoskeleton. Its subcellular location is the cilium axoneme. The protein operates within protein modification; protein ubiquitination. In terms of biological role, force generating protein of respiratory cilia. Produces force towards the minus ends of microtubules. Dynein has ATPase activity; the force-producing power stroke is thought to occur on release of ADP. Involved in sperm motility; implicated in sperm flagellar assembly. Its function is as follows. May be a substrate-recognition component of a SCF-like ECS (Elongin-Cullin-SOCS-box protein) E3 ubiquitin-protein ligase complex which mediates the ubiquitination and subsequent proteasomal degradation of target proteins. This chain is Dynein axonemal heavy chain 12 (DNAH12), found in Bos taurus (Bovine).